Here is a 983-residue protein sequence, read N- to C-terminus: Protein translocase subunit SecA (983 aa).

ATP is bound by residues Gln83, 101-105 (GEGKT), and Asp489. The segment at 948–983 (ISSEEENNNEKTNININEDLERTKGEAQQTAKNPNE) is disordered. A compositionally biased stretch (polar residues) spans 973–983 (EAQQTAKNPNE).

The protein belongs to the SecA family. As to quaternary structure, monomer and homodimer. Part of the essential Sec protein translocation apparatus which comprises SecA, SecYEG and auxiliary proteins SecDF. Other proteins may also be involved.

The protein resides in the cell membrane. It is found in the cytoplasm. It carries out the reaction ATP + H2O + cellular proteinSide 1 = ADP + phosphate + cellular proteinSide 2.. Its function is as follows. Part of the Sec protein translocase complex. Interacts with the SecYEG preprotein conducting channel. Has a central role in coupling the hydrolysis of ATP to the transfer of proteins into and across the cell membrane, serving as an ATP-driven molecular motor driving the stepwise translocation of polypeptide chains across the membrane. This is Protein translocase subunit SecA from Mesomycoplasma hyopneumoniae (strain 7448) (Mycoplasma hyopneumoniae).